A 211-amino-acid polypeptide reads, in one-letter code: MLTIALSKGRILDDTLPLLAEAGIVPTENPDKSRKLIIPTTQDDVRLLIVRATDVPTYVEHGAADLGVAGKDVLMEYTGQGLYEPLDLQIAQCKLMTAGAIGAAEPKGRLRVATKFVNVAKRYYAEQGRQVDIIKLYGSMELAPLIGLADKIIDVVDTGNTLRANGLEPQELIATISSRLVVNKASMKMQHARIQALIDTLRKAVESRHRG.

The protein belongs to the ATP phosphoribosyltransferase family. Short subfamily. In terms of assembly, heteromultimer composed of HisG and HisZ subunits.

Its subcellular location is the cytoplasm. It carries out the reaction 1-(5-phospho-beta-D-ribosyl)-ATP + diphosphate = 5-phospho-alpha-D-ribose 1-diphosphate + ATP. Its pathway is amino-acid biosynthesis; L-histidine biosynthesis; L-histidine from 5-phospho-alpha-D-ribose 1-diphosphate: step 1/9. In terms of biological role, catalyzes the condensation of ATP and 5-phosphoribose 1-diphosphate to form N'-(5'-phosphoribosyl)-ATP (PR-ATP). Has a crucial role in the pathway because the rate of histidine biosynthesis seems to be controlled primarily by regulation of HisG enzymatic activity. This Pseudomonas fluorescens (strain ATCC BAA-477 / NRRL B-23932 / Pf-5) protein is ATP phosphoribosyltransferase.